Here is a 196-residue protein sequence, read N- to C-terminus: Kunitz trypsin inhibitor 5 (196 aa).

The N-terminal stretch at 1 to 19 (MSSLLYIFLLLAVFISHRG) is a signal peptide. Cys-156 and Cys-167 form a disulfide bridge.

It belongs to the protease inhibitor I3 (leguminous Kunitz-type inhibitor) family.

It localises to the endoplasmic reticulum. Can inhibit both serine proteases and cysteine proteases. May be involved in the modulation of the proteases that participate in the hydrolysis of dietary proteins in the gut of spider mites. This Arabidopsis thaliana (Mouse-ear cress) protein is Kunitz trypsin inhibitor 5.